We begin with the raw amino-acid sequence, 249 residues long: MKLNISFPATGCQKLIEVDDERNVRTFYEKRMATEVAADSLGEEWKGYVVRISGGNDKQGFPMKQGVLTHGRVRLLLSKGHSCYRPRRTGERKRKSVRGCIVDANLSVLNLVIVKKGEKDIPGLTDTTVPRRLGPKRASRIRKLFNLSKEDDVRQYVVRKPLNKEGKKPRTKAPKIQRLVTPRVLQHKRRRIALKKQRTQKNKEEAADYAKLLAKRMKEAKEKRQEQIAKRRRLSSLRASTSKSESSQK.

The span at 216 to 229 (RMKEAKEKRQEQIA) shows a compositional bias: basic and acidic residues. The segment at 216–249 (RMKEAKEKRQEQIAKRRRLSSLRASTSKSESSQK) is disordered. Phosphoserine is present on residues S235, S236, S240, S244, and S247. Residues 236-249 (SLRASTSKSESSQK) are compositionally biased toward low complexity.

Belongs to the eukaryotic ribosomal protein eS6 family. In terms of assembly, component of the small ribosomal subunit. Part of the small subunit (SSU) processome, composed of more than 70 proteins and the RNA chaperone small nucleolar RNA (snoRNA) U3. Ribosomal protein S6 is the major substrate of protein kinases in eukaryote ribosomes. The phosphorylation is stimulated by growth factors, tumor promoting agents, and mitogens. It is dephosphorylated at growth arrest.

It is found in the cytoplasm. It localises to the nucleus. The protein resides in the nucleolus. In terms of biological role, component of the 40S small ribosomal subunit. Plays an important role in controlling cell growth and proliferation through the selective translation of particular classes of mRNA. Part of the small subunit (SSU) processome, first precursor of the small eukaryotic ribosomal subunit. During the assembly of the SSU processome in the nucleolus, many ribosome biogenesis factors, an RNA chaperone and ribosomal proteins associate with the nascent pre-rRNA and work in concert to generate RNA folding, modifications, rearrangements and cleavage as well as targeted degradation of pre-ribosomal RNA by the RNA exosome. The chain is Small ribosomal subunit protein eS6 (RPS6) from Gallus gallus (Chicken).